We begin with the raw amino-acid sequence, 322 residues long: Acetyl-coenzyme A carboxylase carboxyl transferase subunit alpha (322 aa).

One can recognise a CoA carboxyltransferase C-terminal domain in the interval 43 to 297 (ALKSKSNALT…KEVLTQQLNK (255 aa)).

It belongs to the AccA family. As to quaternary structure, acetyl-CoA carboxylase is a heterohexamer composed of biotin carboxyl carrier protein (AccB), biotin carboxylase (AccC) and two subunits each of ACCase subunit alpha (AccA) and ACCase subunit beta (AccD).

The protein resides in the cytoplasm. The enzyme catalyses N(6)-carboxybiotinyl-L-lysyl-[protein] + acetyl-CoA = N(6)-biotinyl-L-lysyl-[protein] + malonyl-CoA. It participates in lipid metabolism; malonyl-CoA biosynthesis; malonyl-CoA from acetyl-CoA: step 1/1. In terms of biological role, component of the acetyl coenzyme A carboxylase (ACC) complex. First, biotin carboxylase catalyzes the carboxylation of biotin on its carrier protein (BCCP) and then the CO(2) group is transferred by the carboxyltransferase to acetyl-CoA to form malonyl-CoA. This chain is Acetyl-coenzyme A carboxylase carboxyl transferase subunit alpha, found in Vesicomyosocius okutanii subsp. Calyptogena okutanii (strain HA).